Reading from the N-terminus, the 122-residue chain is Large ribosomal subunit protein uL14c (122 aa).

This sequence belongs to the universal ribosomal protein uL14 family. Part of the 50S ribosomal subunit.

The protein localises to the plastid. It is found in the chloroplast. In terms of biological role, binds to 23S rRNA. This is Large ribosomal subunit protein uL14c from Nicotiana sylvestris (Wood tobacco).